The sequence spans 28 residues: N-acetyl-D-galactosamine-binding lectin subunit A (28 aa).

It belongs to the ribosome-inactivating protein family. In terms of assembly, disulfide-linked heterodimer of A and B chains.

It carries out the reaction Endohydrolysis of the N-glycosidic bond at one specific adenosine on the 28S rRNA.. In terms of biological role, gal / GalNAc-specific lectin. Agglutinates both native and trypsin-treated rabbit erythrocytes but not human erythrocytes irrespective of blood group type. In Iris hollandica (Dutch iris), this protein is N-acetyl-D-galactosamine-binding lectin subunit A.